The chain runs to 569 residues: Proline--tRNA ligase (569 aa).

It belongs to the class-II aminoacyl-tRNA synthetase family. ProS type 1 subfamily. In terms of assembly, homodimer.

The protein resides in the cytoplasm. The enzyme catalyses tRNA(Pro) + L-proline + ATP = L-prolyl-tRNA(Pro) + AMP + diphosphate. Its function is as follows. Catalyzes the attachment of proline to tRNA(Pro) in a two-step reaction: proline is first activated by ATP to form Pro-AMP and then transferred to the acceptor end of tRNA(Pro). As ProRS can inadvertently accommodate and process non-cognate amino acids such as alanine and cysteine, to avoid such errors it has two additional distinct editing activities against alanine. One activity is designated as 'pretransfer' editing and involves the tRNA(Pro)-independent hydrolysis of activated Ala-AMP. The other activity is designated 'posttransfer' editing and involves deacylation of mischarged Ala-tRNA(Pro). The misacylated Cys-tRNA(Pro) is not edited by ProRS. This chain is Proline--tRNA ligase, found in Legionella pneumophila (strain Lens).